An 89-amino-acid chain; its full sequence is Small ribosomal subunit protein uS14 (89 aa).

This sequence belongs to the universal ribosomal protein uS14 family. Part of the 30S ribosomal subunit. Contacts proteins S3 and S10.

In terms of biological role, binds 16S rRNA, required for the assembly of 30S particles and may also be responsible for determining the conformation of the 16S rRNA at the A site. The polypeptide is Small ribosomal subunit protein uS14 (Lacticaseibacillus casei (strain BL23) (Lactobacillus casei)).